The chain runs to 418 residues: tRNA(Met) cytidine acetate ligase (418 aa).

Residues Gly-95, Asn-161, and Arg-186 each contribute to the ATP site.

The protein belongs to the TmcAL family.

The protein localises to the cytoplasm. The enzyme catalyses cytidine(34) in elongator tRNA(Met) + acetate + ATP = N(4)-acetylcytidine(34) in elongator tRNA(Met) + AMP + diphosphate. In terms of biological role, catalyzes the formation of N(4)-acetylcytidine (ac(4)C) at the wobble position of elongator tRNA(Met), using acetate and ATP as substrates. First activates an acetate ion to form acetyladenylate (Ac-AMP) and then transfers the acetyl group to tRNA to form ac(4)C34. This Thermotoga maritima (strain ATCC 43589 / DSM 3109 / JCM 10099 / NBRC 100826 / MSB8) protein is tRNA(Met) cytidine acetate ligase.